Consider the following 512-residue polypeptide: Transmembrane protein 102 (512 aa).

Topologically, residues 1-267 (MASAVWGNAP…EAWPTLCPAQ (267 aa)) are extracellular. The tract at residues 168–258 (PVPGGRDWIH…PGPQPSEARE (91 aa)) is disordered. Composition is skewed to basic and acidic residues over residues 174–186 (DWIH…EGPR) and 195–209 (PHSD…ESLE). A compositionally biased stretch (polar residues) spans 210–226 (KSPSNVSVPESPQQNLT). Residues 268–284 (VAAWFFASLAAVAESLF) form a helical membrane-spanning segment. Residues 285-512 (PVPGAPRLVH…GLAGVGAGSH (228 aa)) lie on the Cytoplasmic side of the membrane.

As to quaternary structure, interacts with CSF2RB; this interaction occurs preferentially in the absence of CSF2.

The protein localises to the cell membrane. Functionally, selectively involved in CSF2 deprivation-induced apoptosis via a mitochondria-dependent pathway. The sequence is that of Transmembrane protein 102 (TMEM102) from Bos taurus (Bovine).